A 341-amino-acid chain; its full sequence is tRNA N6-adenosine threonylcarbamoyltransferase (341 aa).

H111 and H115 together coordinate Fe cation. Substrate-binding positions include 134–138 (LVSGG), D167, G180, and N274. D302 serves as a coordination point for Fe cation.

The protein belongs to the KAE1 / TsaD family. It depends on Fe(2+) as a cofactor.

Its subcellular location is the cytoplasm. It carries out the reaction L-threonylcarbamoyladenylate + adenosine(37) in tRNA = N(6)-L-threonylcarbamoyladenosine(37) in tRNA + AMP + H(+). Required for the formation of a threonylcarbamoyl group on adenosine at position 37 (t(6)A37) in tRNAs that read codons beginning with adenine. Is involved in the transfer of the threonylcarbamoyl moiety of threonylcarbamoyl-AMP (TC-AMP) to the N6 group of A37, together with TsaE and TsaB. TsaD likely plays a direct catalytic role in this reaction. The chain is tRNA N6-adenosine threonylcarbamoyltransferase from Paraburkholderia phymatum (strain DSM 17167 / CIP 108236 / LMG 21445 / STM815) (Burkholderia phymatum).